The chain runs to 143 residues: Large ribosomal subunit protein uL13 (143 aa).

The protein belongs to the universal ribosomal protein uL13 family. In terms of assembly, part of the 50S ribosomal subunit.

Its function is as follows. This protein is one of the early assembly proteins of the 50S ribosomal subunit, although it is not seen to bind rRNA by itself. It is important during the early stages of 50S assembly. This chain is Large ribosomal subunit protein uL13, found in Natranaerobius thermophilus (strain ATCC BAA-1301 / DSM 18059 / JW/NM-WN-LF).